The following is a 312-amino-acid chain: MGKRKPIPSINIGNNLNKKLKFSKQDSDQQQQQQQEQQPQQPQQPIIKYKSKREKEIHEKIDKIKSERKFIYKNAERHVKLSLEYAGLALSLPAVLKDLHRALEKFDALESSLIAELESLKIPVKNASTIPVLHPPINHVNTSIATTAAASINNNNNNDNTITTTTTTTTISNDNLASTTNSLPVNSVPRTTATLSDVNSLITATLGPTTAPTIGSSATTGDTTAIDGTNTNVTTDTTTIETTMKKKGRPPLFKEIPENCYVCGVTETPYWRRGTDEGVMVDLCNACGLRYMKLEKKERLLKQKNSTSNVLN.

Disordered regions lie at residues 1-45 (MGKR…PQQP) and 213-232 (TIGSSATTGDTTAIDGTNTN). Over residues 29–45 (QQQQQQQEQQPQQPQQP) the composition is skewed to low complexity. The segment at 260 to 287 (CYVCGVTETPYWRRGTDEGVMVDLCNAC) adopts a GATA-type zinc-finger fold.

The polypeptide is GATA zinc finger domain-containing protein 20 (gtaT) (Dictyostelium discoideum (Social amoeba)).